Reading from the N-terminus, the 186-residue chain is Mitochondrial import inner membrane translocase subunit Tim22 (186 aa).

Intrachain disulfides connect Cys-61–Cys-133 and Cys-152–Cys-171. A run of 3 helical transmembrane segments spans residues 66–86 (ALAC…TAGI), 117–135 (YAKN…ECLV), and 162–182 (AGLK…AVID).

The protein belongs to the Tim17/Tim22/Tim23 family. Core component of the TIM22 complex.

The protein localises to the mitochondrion inner membrane. In terms of biological role, essential core component of the TIM22 complex, a complex that mediates the import and insertion of multi-pass transmembrane proteins into the mitochondrial inner membrane. In the TIM22 complex, it constitutes the voltage-activated and signal-gated channel. Forms a twin-pore translocase that uses the membrane potential as external driving force in 2 voltage-dependent steps. The sequence is that of Mitochondrial import inner membrane translocase subunit Tim22 (timm22) from Xenopus tropicalis (Western clawed frog).